The sequence spans 433 residues: 26S proteasome regulatory subunit 7 (433 aa).

Residues 1–23 (MPDYLGADQRKTKEEEKEDKPIR) form a disordered region. The span at 8-23 (DQRKTKEEEKEDKPIR) shows a compositional bias: basic and acidic residues. 216–223 (GPPGTGKT) serves as a coordination point for ATP.

The protein belongs to the AAA ATPase family. Post-translationally, phosphorylated. Dephosphorylated by ublcp1 which impairs psmc2 ATPase activity and disrupts 26S proteasome assembly.

It localises to the cytoplasm. The protein localises to the nucleus. The 26S proteasome is involved in the ATP-dependent degradation of ubiquitinated proteins. The regulatory (or ATPase) complex confers ATP dependency and substrate specificity to the 26S complex. This Xenopus laevis (African clawed frog) protein is 26S proteasome regulatory subunit 7 (psmc2).